The sequence spans 133 residues: Interleukin-4 (133 aa).

Residues 1–24 form the signal peptide; it reads MGLTSQLIPTLVCLLACTSNFVHG. Intrachain disulfides connect cysteine 27–cysteine 133, cysteine 48–cysteine 85, and cysteine 70–cysteine 105. Asparagine 62 is a glycosylation site (N-linked (GlcNAc...) asparagine).

The protein belongs to the IL-4/IL-13 family.

It is found in the secreted. Participates in at least several B-cell activation processes as well as of other cell types. It is a costimulator of DNA-synthesis. It induces the expression of class II MHC molecules on resting B-cells. It enhances both secretion and cell surface expression of IgE and IgG1. It also regulates the expression of the low affinity Fc receptor for IgE (CD23) on both lymphocytes and monocytes. Positively regulates IL31RA expression in macrophages. Stimulates autophagy in dendritic cells by interfering with mTORC1 signaling and through the induction of RUFY4. This is Interleukin-4 (IL4) from Sus scrofa (Pig).